The primary structure comprises 785 residues: Solute carrier family 45 member 4 (785 aa).

Positions 1-43 are disordered; the sequence is MKMAPQNADSESMQVQELPVPLPDPQKPRDPEAETQEETTSEG. The next 6 helical transmembrane spans lie at 64-84, 87-107, 124-144, 156-176, 197-217, and 234-254; these read EFCY…IGLP, YYSL…PLIG, ILAL…GSAI, PIGI…ADAT, LNIH…LGGL, and VLFF…LFSI. Disordered regions lie at residues 259-309 and 401-430; these read YSPQ…VQSE and KVPN…SGSM. Residues Ser-442 and Ser-472 each carry the phosphoserine modification. Residues 478–505 are disordered; the sequence is DLQQRQRSRHRNQSGATASSGDTESEEG. The segment covering 490-499 has biased composition (low complexity); the sequence is QSGATASSGD. Position 502 is a phosphoserine (Ser-502). 6 helical membrane passes run 525–545, 577–597, 609–629, 631–651, 683–703, and 709–729; these read LMWL…EAVF, MGCW…ALLQ, IIYM…AMFP, VYVA…ISYC, ILSC…GGVV, and IVVI…TATF. The interval 741 to 772 is disordered; it reads KEEQKGLSSGPAGEGEGGAGSEKPTVLKLSRK. At Ser-749 the chain carries Phosphoserine.

This sequence belongs to the glycoside-pentoside-hexuronide (GPH) cation symporter transporter (TC 2.A.2) family. Ubiquitously expressed.

The protein resides in the membrane. It carries out the reaction sucrose(out) + H(+)(out) = sucrose(in) + H(+)(in). Proton-associated sucrose transporter. May be able to transport also glucose and fructose. The chain is Solute carrier family 45 member 4 (Slc45a4) from Mus musculus (Mouse).